Consider the following 166-residue polypeptide: Large ribosomal subunit protein uL10 (166 aa).

This sequence belongs to the universal ribosomal protein uL10 family. Part of the ribosomal stalk of the 50S ribosomal subunit. The N-terminus interacts with L11 and the large rRNA to form the base of the stalk. The C-terminus forms an elongated spine to which L12 dimers bind in a sequential fashion forming a multimeric L10(L12)X complex.

Functionally, forms part of the ribosomal stalk, playing a central role in the interaction of the ribosome with GTP-bound translation factors. This chain is Large ribosomal subunit protein uL10, found in Pseudomonas putida (strain W619).